We begin with the raw amino-acid sequence, 212 residues long: HTH-type transcriptional regulator RutR (212 aa).

In terms of domain architecture, HTH tetR-type spans 17 to 77 (SAKKKAILSA…AVLRQILDIW (61 aa)). A DNA-binding region (H-T-H motif) is located at residues 39-58 (TRLEQIAELAGVSKTNLLYY).

As to quaternary structure, homodimer.

In terms of biological role, master transcription regulator which represses the degradation of pyrimidines (rutABCDEFG) and purines (gcl operon) for maintenance of metabolic balance between pyrimidines and purines. It also regulates the synthesis of pyrimidine nucleotides and arginine from glutamine (carAB) and the supply of glutamate (gadABWX). The protein is HTH-type transcriptional regulator RutR (rutR) of Escherichia coli O157:H7.